The chain runs to 243 residues: Proteasome subunit beta (243 aa).

The disordered stretch occupies residues 1–46 (MFNPNNGSEFARNRARLDDTPNPYEPEVGSLPEGDRSQAGSDTVNK). Residues 1-48 (MFNPNNGSEFARNRARLDDTPNPYEPEVGSLPEGDRSQAGSDTVNKTG) constitute a propeptide, removed in mature form; by autocatalysis. T49 (nucleophile) is an active-site residue.

The protein belongs to the peptidase T1B family. The 20S proteasome core is composed of 14 alpha and 14 beta subunits that assemble into four stacked heptameric rings, resulting in a barrel-shaped structure. The two inner rings, each composed of seven catalytic beta subunits, are sandwiched by two outer rings, each composed of seven alpha subunits. The catalytic chamber with the active sites is on the inside of the barrel. Has a gated structure, the ends of the cylinder being occluded by the N-termini of the alpha-subunits. Is capped at one or both ends by the proteasome regulatory ATPase, PAN.

The protein localises to the cytoplasm. The enzyme catalyses Cleavage of peptide bonds with very broad specificity.. Its activity is regulated as follows. The formation of the proteasomal ATPase PAN-20S proteasome complex, via the docking of the C-termini of PAN into the intersubunit pockets in the alpha-rings, triggers opening of the gate for substrate entry. Interconversion between the open-gate and close-gate conformations leads to a dynamic regulation of the 20S proteasome proteolysis activity. Functionally, component of the proteasome core, a large protease complex with broad specificity involved in protein degradation. This chain is Proteasome subunit beta, found in Halobacterium salinarum (strain ATCC 29341 / DSM 671 / R1).